A 686-amino-acid chain; its full sequence is Translation initiation factor IF-2 (686 aa).

Residues 53 to 105 (EKPSVADEFEVEEKVVRSKKNSNKKKKKGKGNEDKRQENFAGRQQTQTVETPD) form a disordered region. Residues 69–81 (RSKKNSNKKKKKG) are compositionally biased toward basic residues. The tr-type G domain maps to 188–357 (ERPAVVTIMG…LLVSEVEEYK (170 aa)). Residues 197 to 204 (GHVDHGKT) form a G1 region. 197–204 (GHVDHGKT) contributes to the GTP binding site. The tract at residues 222-226 (GITQH) is G2. A G3 region spans residues 243–246 (DTPG). GTP-binding positions include 243–247 (DTPGH) and 297–300 (NKMD). A G4 region spans residues 297 to 300 (NKMD). A G5 region spans residues 333–335 (SAI).

Belongs to the TRAFAC class translation factor GTPase superfamily. Classic translation factor GTPase family. IF-2 subfamily.

The protein resides in the cytoplasm. One of the essential components for the initiation of protein synthesis. Protects formylmethionyl-tRNA from spontaneous hydrolysis and promotes its binding to the 30S ribosomal subunits. Also involved in the hydrolysis of GTP during the formation of the 70S ribosomal complex. The sequence is that of Translation initiation factor IF-2 from Bacillus cereus (strain ATCC 10987 / NRS 248).